The primary structure comprises 126 residues: Protein ApaG (126 aa).

One can recognise an ApaG domain in the interval 2-126; sequence NQLAASVSVD…FRLSIPGLLH (125 aa).

This is Protein ApaG from Shewanella pealeana (strain ATCC 700345 / ANG-SQ1).